We begin with the raw amino-acid sequence, 968 residues long: MPIPALPSLQQLENAEEFLARHIGIDAADEARMLPVIGSETRAELIDGIVPAAIRRAKPMRLPAPATEADALAELKAIAAKNKVFRSFIGQGYYGTHTPGVILRNVLENPAWYTAYTPYQAEISQGRMEALLNFQTMVCDLTGMAIANASMLDEATAAAEAMTLAKRSVKSKSNVFLVSGDCHPQTIEVIKTRAAPLGIEVKVSTVSETLPHLMVSGEFFGVLAQYPATTGHVHDLRPLAGHAHQCDAAFCVAADLLALTLLAPPGEWDADIVCGTTQRFGMPMCNGGPHAAYLACRDEFKRSLPGRLVGVSVDTHGQPAYRLALQTREQHIRREKATSNICTAQVLPAVVASMYAVYHGPDGLTRIAQRVAALTAILAQGLAQMGREPVNGTAFDSLTIRTGDDTPKIIERAQAAGVNLRQRLQQHLGISLDETTTRADIETLWALFVPAGTPMPRFDDLANAVPRLPEDLRRTSAFLTHPVFNTHKSETAMLRYIRSLSDKDLALDRSMIPLGSCTMKLNATSEMIPITWPEFANIHPFAPAEQLVGYAQLDAQLRAWLCEATGYAGISLQPNAGSQGEYAGLLAIRSFHEANGQGHRNICLIPSSAHGTNPASAQMVGLQVVVTACDAQGNVDMDDLRRACEKHSDKLAAVMITYPSTHGVFETRVKELCELVHEHGGRVYVDGANMNALVGVAAPGEFGGDVSHLNLHKTFCIPHGGGGPGVGPVCVVEDLVPYLPGHATAGVASNGVGAVSAAPLGNAAVLPISWMYCRMMGAKGLQAATEIAILSANYISARLKDHYPTLYASPNGHVAHECILDLRPLKDSSGVTAEDVAKRLIDYGFHAPTLSFPVPGTLMVEPTESEPLAELDRFIDAMIAIRGEIRRVEEGVWPKDDNPLKHAPHTAASLMAAEWPHPYSRELGAFPLAELKLAKYWPPIGRVDNVYGDRNLFCSCVPVGDYKETEEA.

K713 is subject to N6-(pyridoxal phosphate)lysine.

It belongs to the GcvP family. As to quaternary structure, the glycine cleavage system is composed of four proteins: P, T, L and H. Requires pyridoxal 5'-phosphate as cofactor.

It catalyses the reaction N(6)-[(R)-lipoyl]-L-lysyl-[glycine-cleavage complex H protein] + glycine + H(+) = N(6)-[(R)-S(8)-aminomethyldihydrolipoyl]-L-lysyl-[glycine-cleavage complex H protein] + CO2. Functionally, the glycine cleavage system catalyzes the degradation of glycine. The P protein binds the alpha-amino group of glycine through its pyridoxal phosphate cofactor; CO(2) is released and the remaining methylamine moiety is then transferred to the lipoamide cofactor of the H protein. The polypeptide is Glycine dehydrogenase (decarboxylating) (Variovorax paradoxus (strain S110)).